The following is a 219-amino-acid chain: Thiamine-phosphate synthase (219 aa).

4-amino-2-methyl-5-(diphosphooxymethyl)pyrimidine is bound by residues 48–52 and asparagine 84; that span reads QFRQK. The Mg(2+) site is built by aspartate 85 and aspartate 104. Serine 123 is a 4-amino-2-methyl-5-(diphosphooxymethyl)pyrimidine binding site. A 2-[(2R,5Z)-2-carboxy-4-methylthiazol-5(2H)-ylidene]ethyl phosphate-binding site is contributed by 150 to 152; the sequence is TQS. Lysine 153 is a 4-amino-2-methyl-5-(diphosphooxymethyl)pyrimidine binding site. Residues glycine 181 and 199–200 contribute to the 2-[(2R,5Z)-2-carboxy-4-methylthiazol-5(2H)-ylidene]ethyl phosphate site; that span reads IS.

It belongs to the thiamine-phosphate synthase family. The cofactor is Mg(2+).

It catalyses the reaction 2-[(2R,5Z)-2-carboxy-4-methylthiazol-5(2H)-ylidene]ethyl phosphate + 4-amino-2-methyl-5-(diphosphooxymethyl)pyrimidine + 2 H(+) = thiamine phosphate + CO2 + diphosphate. It carries out the reaction 2-(2-carboxy-4-methylthiazol-5-yl)ethyl phosphate + 4-amino-2-methyl-5-(diphosphooxymethyl)pyrimidine + 2 H(+) = thiamine phosphate + CO2 + diphosphate. The catalysed reaction is 4-methyl-5-(2-phosphooxyethyl)-thiazole + 4-amino-2-methyl-5-(diphosphooxymethyl)pyrimidine + H(+) = thiamine phosphate + diphosphate. The protein operates within cofactor biosynthesis; thiamine diphosphate biosynthesis; thiamine phosphate from 4-amino-2-methyl-5-diphosphomethylpyrimidine and 4-methyl-5-(2-phosphoethyl)-thiazole: step 1/1. In terms of biological role, condenses 4-methyl-5-(beta-hydroxyethyl)thiazole monophosphate (THZ-P) and 2-methyl-4-amino-5-hydroxymethyl pyrimidine pyrophosphate (HMP-PP) to form thiamine monophosphate (TMP). The polypeptide is Thiamine-phosphate synthase (Helicobacter pylori (strain Shi470)).